Consider the following 1068-residue polypeptide: MASTLPIPDINVIAPSFIQRDSQNSDNMKPPPTDFNHPYTPYPIQTAFMQTLYSVLDRTVAVSPPTTTNSTNNTAPSATFSSTAATLIPSNPSTSPSTPPLINPTTAPTVHLADRATEPSLSVTPRTTTSKDKDKGPSSSSSVPKGHAQIALFESPTGTGKSLSLICGSLTWLRNHKRLQFDSEIEKIQQQMEASGEPEWMVESAIKRKREELAQKYEEMERTLERIRQKEREMEKEGEEGQARGGKRRKLDRGKGDEEKGGKKKESGGSRGLTASDEDKEFLIGDWRDEGGLDENDPMGQLSKETRELLEKVGMGTAGGKKEANEGPVAEEEIKIFYTSRTHSQLTQFIQELRRPEFPASVPTPNPQEKPAKEIVKQIPLSSRQKLCINPTVNKLGTLAAINERCQSLQQPKTPKDQRCPYLPNAANLKATHEFRDTALATLPDIEDLYQTGKQLQICPYYASRAAIPGAEVITLPYPLLLQKSAREALGIRLEGNIVIIDEAHNIMDAVSNVHAAEIKYTDLKRAKLSLGMYYQRFHQKLTGENKVMVAQLQRVVEALGVYLKTKLDKAALGLKADQEGIVLDTSLLLKTGGADQINLYKLIRYVQESKLAFKIEGYISYCEEEGRDTDDEEAETEIKARQGRPPVLHTLCSFLTALTNLSSEGRIFYEKIPPPRGELQDMKLSYMLLSPTHAFSSIAESARAVILAGGTMSPFEDYKAHLFPDVPPEKITTLSCGHVIPPDNLCVWTLGSIAPNPKVDTGIGEDCFDFTFAKRSNPNMINRLGLVLLNLCSVVPDGVVAFFPSYGYLEEVIGVWKTHEQAMGPKTIWERLESKKALFIDSKTESSEQTLQKYSDVIHSEVRPLSPAGSRVKGAMLLSVIGGKMSEGINFSDRLGRCVVVVGMPYPNPHSPEWLARREYLEANFIKRYTASQQTSTATAPLPAPVIPPPSNTTHYSTNPSSSRNKDKHKPANVRKLAARDSHQFYENATLRAVNQSIGRAIRHQNDYAAIVLIDNRFEKEHVRAKLPGWIREGWDETQRQAKEDGKALKGLQGMMGRVNMFFRGKN.

The region spanning 31-556 (PPTDFNHPYT…KVMVAQLQRV (526 aa)) is the Helicase ATP-binding domain. Positions 85 to 96 (ATLIPSNPSTSP) are enriched in low complexity. Residues 85–147 (ATLIPSNPST…SSSSSVPKGH (63 aa)) are disordered. A compositionally biased stretch (polar residues) spans 119–128 (PSLSVTPRTT). Residues 137-146 (PSSSSSVPKG) are compositionally biased toward low complexity. ATP is bound at residue 155 to 162 (SPTGTGKS). Composition is skewed to basic and acidic residues over residues 228–242 (RQKE…EEGQ) and 253–268 (RGKG…KESG). The segment at 228-282 (RQKEREMEKEGEEGQARGGKRRKLDRGKGDEEKGGKKKESGGSRGLTASDEDKEF) is disordered. Residues C388, C406, C420, and C459 each contribute to the [4Fe-4S] cluster site. A DEAH box motif is present at residues 502-505 (DEAH). Over residues 933 to 942 (SQQTSTATAP) the composition is skewed to low complexity. A disordered region spans residues 933–974 (SQQTSTATAPLPAPVIPPPSNTTHYSTNPSSSRNKDKHKPAN). The span at 943–952 (LPAPVIPPPS) shows a compositional bias: pro residues. Polar residues predominate over residues 953 to 964 (NTTHYSTNPSSS).

Belongs to the DEAD box helicase family. DEAH subfamily. DDX11/CHL1 sub-subfamily. The cofactor is [4Fe-4S] cluster.

Its subcellular location is the nucleus. The enzyme catalyses Couples ATP hydrolysis with the unwinding of duplex DNA at the replication fork by translocating in the 5'-3' direction. This creates two antiparallel DNA single strands (ssDNA). The leading ssDNA polymer is the template for DNA polymerase III holoenzyme which synthesizes a continuous strand.. It catalyses the reaction ATP + H2O = ADP + phosphate + H(+). Its function is as follows. ATP-dependent DNA helicase important for chromosome transmission and normal cell cycle progression in G(2)/M. May have a role in changing DNA topology to allow the loading of proteins involved in maintaining sister chromatid cohesion in the vicinity of the centromeres. Has a specific role in chromosome segregation during meiosis II. This chain is ATP-dependent DNA helicase chl1 (chl1), found in Neurospora crassa (strain ATCC 24698 / 74-OR23-1A / CBS 708.71 / DSM 1257 / FGSC 987).